The primary structure comprises 483 residues: GTPase Der (483 aa).

2 EngA-type G domains span residues F3–R167 and L212–N387. GTP contacts are provided by residues G9–S16, D56–L60, N119–E122, G218–S225, D265–L269, and N330–D333. Residues R388–D472 enclose the KH-like domain.

It belongs to the TRAFAC class TrmE-Era-EngA-EngB-Septin-like GTPase superfamily. EngA (Der) GTPase family. As to quaternary structure, associates with the 50S ribosomal subunit.

In terms of biological role, GTPase that plays an essential role in the late steps of ribosome biogenesis. In Brucella anthropi (strain ATCC 49188 / DSM 6882 / CCUG 24695 / JCM 21032 / LMG 3331 / NBRC 15819 / NCTC 12168 / Alc 37) (Ochrobactrum anthropi), this protein is GTPase Der.